The sequence spans 394 residues: NAD(P)H-quinone oxidoreductase subunit H (394 aa).

It belongs to the complex I 49 kDa subunit family. NDH-1 can be composed of about 15 different subunits; different subcomplexes with different compositions have been identified which probably have different functions.

It localises to the cellular thylakoid membrane. The enzyme catalyses a plastoquinone + NADH + (n+1) H(+)(in) = a plastoquinol + NAD(+) + n H(+)(out). The catalysed reaction is a plastoquinone + NADPH + (n+1) H(+)(in) = a plastoquinol + NADP(+) + n H(+)(out). In terms of biological role, NDH-1 shuttles electrons from an unknown electron donor, via FMN and iron-sulfur (Fe-S) centers, to quinones in the respiratory and/or the photosynthetic chain. The immediate electron acceptor for the enzyme in this species is believed to be plastoquinone. Couples the redox reaction to proton translocation, and thus conserves the redox energy in a proton gradient. Cyanobacterial NDH-1 also plays a role in inorganic carbon-concentration. The polypeptide is NAD(P)H-quinone oxidoreductase subunit H (Prochlorococcus marinus (strain NATL1A)).